Here is an 809-residue protein sequence, read N- to C-terminus: Lon protease (809 aa).

The Lon N-terminal domain maps to 8–203 (LPVVALRNMA…RLCLILADEI (196 aa)). 354-361 (GPPGTGKT) is a binding site for ATP. The 181-residue stretch at 629 to 809 (KDEVGIVCGL…MDEVLKHALV (181 aa)) folds into the Lon proteolytic domain. Catalysis depends on residues Ser-716 and Lys-759.

Belongs to the peptidase S16 family. In terms of assembly, homohexamer. Organized in a ring with a central cavity.

Its subcellular location is the cytoplasm. The catalysed reaction is Hydrolysis of proteins in presence of ATP.. Functionally, ATP-dependent serine protease that mediates the selective degradation of mutant and abnormal proteins as well as certain short-lived regulatory proteins. Required for cellular homeostasis and for survival from DNA damage and developmental changes induced by stress. Degrades polypeptides processively to yield small peptide fragments that are 5 to 10 amino acids long. Binds to DNA in a double-stranded, site-specific manner. In Lachnoclostridium phytofermentans (strain ATCC 700394 / DSM 18823 / ISDg) (Clostridium phytofermentans), this protein is Lon protease.